The sequence spans 359 residues: Pyruvate dehydrogenase E1 component subunit beta, mitochondrial (359 aa).

The transit peptide at 1 to 30 (MAAVSGLVRRPLREVSRLLKRRFHWTAPAA) directs the protein to the mitochondrion. Position 67 is a phosphotyrosine (Tyr67). Glu89 lines the thiamine diphosphate pocket. Residues Ile142, Ala190, Ile191, Asp193, and Asn195 each contribute to the K(+) site. At Lys354 the chain carries N6-acetyllysine.

Heterotetramer of two PDHA1 and two PDHB subunits. The heterotetramer interacts with DLAT, and is part of the multimeric pyruvate dehydrogenase complex that contains multiple copies of pyruvate dehydrogenase (E1), dihydrolipoamide acetyltransferase (DLAT, E2) and lipoamide dehydrogenase (DLD, E3). These subunits are bound to an inner core composed of about 48 DLAT and 12 PDHX molecules. Interacts with DLAT. The cofactor is thiamine diphosphate.

The protein resides in the mitochondrion matrix. The enzyme catalyses N(6)-[(R)-lipoyl]-L-lysyl-[protein] + pyruvate + H(+) = N(6)-[(R)-S(8)-acetyldihydrolipoyl]-L-lysyl-[protein] + CO2. Functionally, the pyruvate dehydrogenase complex catalyzes the overall conversion of pyruvate to acetyl-CoA and CO(2), and thereby links the glycolytic pathway to the tricarboxylic cycle. The polypeptide is Pyruvate dehydrogenase E1 component subunit beta, mitochondrial (PDHB) (Pongo abelii (Sumatran orangutan)).